The chain runs to 514 residues: Uridylate cyclase (514 aa).

2 consecutive Guanylate cyclase domains span residues 49–190 (VHMY…AKLA) and 286–428 (VSLY…EKRQ). A ribonucleoside 5'-triphosphate-binding positions include Tyr52, Arg105, Phe178, 184-188 (NHAAK), and 291-296 (DIDGFT). The Ca(2+) site is built by Asp291, Ile292, and Asp339. Mn(2+) is bound at residue Asp291. The disordered stretch occupies residues 495 to 514 (IRADERQVQPHSRQKVDGSR). Residues 496 to 514 (RADERQVQPHSRQKVDGSR) are compositionally biased toward basic and acidic residues.

It belongs to the adenylyl cyclase class-4/guanylyl cyclase family. Pyrimidine cyclase subfamily. In terms of assembly, monomer. The cofactor is a divalent metal cation.

Its subcellular location is the cytoplasm. The catalysed reaction is UTP = 3',5'-cyclic UMP + diphosphate. In terms of biological role, pycsar (pyrimidine cyclase system for antiphage resistance) provides immunity against bacteriophage. The pyrimidine cyclase (PycC) synthesizes cyclic nucleotides in response to infection; these serve as specific second messenger signals. The signals activate the adjacent effector, leading to bacterial cell death and abortive phage infection. A clade A Pycsar system. Its function is as follows. The pyrimidine cyclase gene of a two-gene Pycsar system, generates cyclic UMP (cUMP) from UTP, has little to no activity on ATP, CTP or GTP. Expression of this and adjacent effector PaPycTIR (AC P0DV41) probably confers resistance to bacteriophage. The genes are probably only expressed in response to bacteriophage infection. Does not have adenylyl or guanylyl cyclase activity. This Pseudomonas aeruginosa protein is Uridylate cyclase.